A 317-amino-acid chain; its full sequence is Type II restriction enzyme NaeI (317 aa).

In terms of assembly, homodimer.

The catalysed reaction is Endonucleolytic cleavage of DNA to give specific double-stranded fragments with terminal 5'-phosphates.. In terms of biological role, an E and P subtype restriction enzyme that recognizes the double-stranded unmethylated sequence 5'-GCCGGC-3' and cleaves after C-3. The protein is Type II restriction enzyme NaeI of Lentzea aerocolonigenes (Lechevalieria aerocolonigenes).